The chain runs to 20 residues: Catechol 1,2-dioxygenase (20 aa).

Belongs to the intradiol ring-cleavage dioxygenase family. In terms of assembly, homodimer which dissociates into active monomeric subunits at high ionic strengths. Fe(3+) is required as a cofactor.

It catalyses the reaction catechol + O2 = cis,cis-muconate + 2 H(+). Its pathway is aromatic compound metabolism; beta-ketoadipate pathway; 5-oxo-4,5-dihydro-2-furylacetate from catechol: step 1/3. The chain is Catechol 1,2-dioxygenase from Acinetobacter radioresistens.